The primary structure comprises 293 residues: Elongation factor Ts (293 aa).

The involved in Mg(2+) ion dislocation from EF-Tu stretch occupies residues 81 to 84; the sequence is TDFV.

This sequence belongs to the EF-Ts family.

The protein localises to the cytoplasm. Its function is as follows. Associates with the EF-Tu.GDP complex and induces the exchange of GDP to GTP. It remains bound to the aminoacyl-tRNA.EF-Tu.GTP complex up to the GTP hydrolysis stage on the ribosome. The polypeptide is Elongation factor Ts (Methylococcus capsulatus (strain ATCC 33009 / NCIMB 11132 / Bath)).